Here is a 245-residue protein sequence, read N- to C-terminus: Haloacid dehalogenase-like hydrolase domain-containing protein At2g33255 (245 aa).

Threonine 2 is modified (N-acetylalanine). The active-site Nucleophile is the aspartate 39. Mg(2+)-binding residues include aspartate 39, aspartate 41, and aspartate 186. Residue aspartate 41 is the Proton donor of the active site.

Belongs to the HAD-like hydrolase superfamily. DOG/GPP family. It depends on Mg(2+) as a cofactor.

The sequence is that of Haloacid dehalogenase-like hydrolase domain-containing protein At2g33255 from Arabidopsis thaliana (Mouse-ear cress).